The following is a 428-amino-acid chain: Serine--tRNA ligase (428 aa).

235–237 provides a ligand contact to L-serine; sequence TAE. 266 to 268 provides a ligand contact to ATP; sequence RSE. Residue E289 participates in L-serine binding. ATP is bound at residue 353 to 356; the sequence is EISS. S389 serves as a coordination point for L-serine.

It belongs to the class-II aminoacyl-tRNA synthetase family. Type-1 seryl-tRNA synthetase subfamily. In terms of assembly, homodimer. The tRNA molecule binds across the dimer.

It localises to the cytoplasm. It carries out the reaction tRNA(Ser) + L-serine + ATP = L-seryl-tRNA(Ser) + AMP + diphosphate + H(+). The enzyme catalyses tRNA(Sec) + L-serine + ATP = L-seryl-tRNA(Sec) + AMP + diphosphate + H(+). Its pathway is aminoacyl-tRNA biosynthesis; selenocysteinyl-tRNA(Sec) biosynthesis; L-seryl-tRNA(Sec) from L-serine and tRNA(Sec): step 1/1. In terms of biological role, catalyzes the attachment of serine to tRNA(Ser). Is also able to aminoacylate tRNA(Sec) with serine, to form the misacylated tRNA L-seryl-tRNA(Sec), which will be further converted into selenocysteinyl-tRNA(Sec). This is Serine--tRNA ligase from Shewanella sp. (strain ANA-3).